Reading from the N-terminus, the 148-residue chain is UPF0756 membrane protein NMCC_1816 (148 aa).

Helical transmembrane passes span 13–35, 50–70, 80–100, and 121–141; these read LILL…LLLM, HGLN…LVSG, FLNF…WLAG, and VIGV…AGIL.

It belongs to the UPF0756 family.

The protein localises to the cell membrane. This chain is UPF0756 membrane protein NMCC_1816, found in Neisseria meningitidis serogroup C (strain 053442).